We begin with the raw amino-acid sequence, 519 residues long: Glutamate--cysteine ligase (519 aa).

The protein belongs to the glutamate--cysteine ligase type 1 family. Type 1 subfamily.

It catalyses the reaction L-cysteine + L-glutamate + ATP = gamma-L-glutamyl-L-cysteine + ADP + phosphate + H(+). It functions in the pathway sulfur metabolism; glutathione biosynthesis; glutathione from L-cysteine and L-glutamate: step 1/2. This Erwinia tasmaniensis (strain DSM 17950 / CFBP 7177 / CIP 109463 / NCPPB 4357 / Et1/99) protein is Glutamate--cysteine ligase.